The primary structure comprises 248 residues: 2,3-bisphosphoglycerate-dependent phosphoglycerate mutase (248 aa).

Substrate is bound by residues 8–15, 21–22, Arg60, 87–90, Lys98, 114–115, and 183–184; these read RHGESTWN, TG, EKHY, RR, and GN. The Tele-phosphohistidine intermediate role is filled by His9. Catalysis depends on Glu87, which acts as the Proton donor/acceptor.

Belongs to the phosphoglycerate mutase family. BPG-dependent PGAM subfamily.

It catalyses the reaction (2R)-2-phosphoglycerate = (2R)-3-phosphoglycerate. It participates in carbohydrate degradation; glycolysis; pyruvate from D-glyceraldehyde 3-phosphate: step 3/5. In terms of biological role, catalyzes the interconversion of 2-phosphoglycerate and 3-phosphoglycerate. The chain is 2,3-bisphosphoglycerate-dependent phosphoglycerate mutase from Elusimicrobium minutum (strain Pei191).